The primary structure comprises 969 residues: Leucine--tRNA ligase (969 aa).

The short motif at 45–55 (PYTNAPLHIGH) is the 'HIGH' region element. Residues 649–653 (KMSKS) carry the 'KMSKS' region motif. Lys-652 serves as a coordination point for ATP.

This sequence belongs to the class-I aminoacyl-tRNA synthetase family.

Its subcellular location is the cytoplasm. The enzyme catalyses tRNA(Leu) + L-leucine + ATP = L-leucyl-tRNA(Leu) + AMP + diphosphate. This Staphylothermus marinus (strain ATCC 43588 / DSM 3639 / JCM 9404 / F1) protein is Leucine--tRNA ligase.